Consider the following 66-residue polypeptide: Kunitz-type serine protease inhibitor Vur-KIn (66 aa).

At Q1 the chain carries Pyrrolidone carboxylic acid. Positions 7–57 (CYLPADPGICKAHKPRFYYNPASNKCKEFFYGGCGGNANNFKTRDECHHTC) constitute a BPTI/Kunitz inhibitor domain. 3 disulfide bridges follow: C7-C57, C16-C40, and C32-C53. A propeptide spanning residues 62 to 66 (MGRPT) is cleaved from the precursor.

The protein belongs to the venom Kunitz-type family. In terms of tissue distribution, expressed by the venom gland.

It is found in the secreted. Its function is as follows. Serine protease inhibitor. The protein is Kunitz-type serine protease inhibitor Vur-KIn of Vipera renardi (Steppe viper).